A 327-amino-acid chain; its full sequence is Mitochondrial substrate carrier family protein A (327 aa).

Positions 1–36 (MVINNQNNNNQNNNQNNNNKNDNLNNSTTTTTTTAT) are disordered. The Mitochondrial intermembrane portion of the chain corresponds to 1–48 (MVINNQNNNNQNNNQNNNNKNDNLNNSTTTTTTTATTTKSSTLFHSND). 3 Solcar repeats span residues 43 to 132 (LFHS…FKRM), 140 to 224 (ISVI…IKEK), and 233 to 323 (PPLY…AITL). Residues 49–66 (FFSGLIAGIVSRTLTAPL) traverse the membrane as a helical segment. At 67-106 (ERIKILNQVEVILKDGTKYNRIIPAFKVIIKEEGIAGLFR) the chain is on the mitochondrial matrix side. A helical transmembrane segment spans residues 107 to 127 (GNFVNIIKAGPQSAIRFYSYG). Topologically, residues 128–145 (AFKRMASEPDGSISVINR) are mitochondrial intermembrane. The chain crosses the membrane as a helical span at residues 146 to 166 (MWAGASSGVVSVALTHPLDVI). Residues 167–192 (KTHITVIAPTAATIKNVTKGIYRDLG) are Mitochondrial matrix-facing. Residues 193-213 (IIGFFRGLSAGILNIAPFAAL) traverse the membrane as a helical segment. Residues 214 to 238 (NFTFYETIKEKTQQYILKSPPLYAP) are Mitochondrial intermembrane-facing. Residues 239–259 (SIYGAISGGLTMTILYPLDVV) form a helical membrane-spanning segment. Over 260–303 (KRRIMLQHFDRNQLPIYKNFIDAIIKITKTEGISALYKGIRPAY) the chain is Mitochondrial matrix. A helical membrane pass occupies residues 304-324 (LKVIPTVSINFLIYEGAITLF). Over 325-327 (EKK) the chain is Mitochondrial intermembrane.

It belongs to the mitochondrial carrier (TC 2.A.29) family.

The protein resides in the mitochondrion inner membrane. Calcium-dependent mitochondrial solute carrier. Mitochondrial solute carriers shuttle metabolites, nucleotides, and cofactors through the mitochondrial inner membrane. This chain is Mitochondrial substrate carrier family protein A (mcfA), found in Dictyostelium discoideum (Social amoeba).